Here is a 548-residue protein sequence, read N- to C-terminus: MKIMNKQSITIFLIICFLINLILSCPNYPEPIKINQNDPTLQKAYKEVDEIIKKGMKDNGIKSFIASIVYRDEIVWSKTYGNVNPLDENSPPLTIDNAIRIASITKTFTDLMMFQLRDKGTISSLDDEVSKYFPEFSIGNLYNTKKSPTFRELSSHQSGLPREVPCDFDDLADWDICSEEVIIERLSKMFLIMPSYQSTHYSNLGIALLGRTLAKAANTEYEKYVKEKILFPLGMMNSSFYYDDVKDYLAQGLILWPNGSYTISPVEELGWSNPMGNLYSTARDMCNYMMFWLNENPEILDSTTLNEAMSPISLLNDGDTVYGTPFEMFYDQANSIWVKSKAGQLSGYRTQMALIRPLKIGMLFSSLLAFQTPDVFTKAASEILIPVYEQLLYEAGSQPQSPFIPDSKLKPTLTTEKYSKEIPNDAFVGTYTNSEGSIFIVDNSTGLLIANFGDDNLFNVSRFSDQYPEILRIKVSNPQDYLCRYVVDGSNYELVYFTITSTPFGGIECNSVTAMGQTMTLASKDPQYLKNNNIEFEKRNKLISKFLQ.

A signal peptide spans 1 to 24; it reads MKIMNKQSITIFLIICFLINLILS. N-linked (GlcNAc...) asparagine glycosylation is found at Asn237, Asn258, Asn443, and Asn459.

It belongs to the beta-lactamase family.

It is found in the secreted. In Dictyostelium discoideum (Social amoeba), this protein is Beta-lactamase-like protein 2.